Reading from the N-terminus, the 148-residue chain is MFDVTLLILLGLAALGFISHNTTVAVSILVLIIVRVTPLNTFFPWIEKQGLTVGIIILTIGVMAPIASGTLPSSTLLHSFENWKSLVAIAVGVFVSWLGGRGVALMGNQPQLVAGLLVGTVLGVALFRGVPVGPLIAAGLVSLIVGRQ.

A run of 4 helical transmembrane segments spans residues alanine 14–valine 34, leucine 51–leucine 71, leucine 86–methionine 106, and valine 121–valine 141.

The protein belongs to the UPF0756 family.

Its subcellular location is the cell membrane. The sequence is that of UPF0756 membrane protein YeaL from Salmonella arizonae (strain ATCC BAA-731 / CDC346-86 / RSK2980).